The sequence spans 557 residues: Dihydroxy-acid dehydratase (557 aa).

Residue Cys-49 participates in [2Fe-2S] cluster binding. Asp-81 is a binding site for Mg(2+). Cys-122 is a binding site for [2Fe-2S] cluster. Residues Asp-123 and Lys-124 each coordinate Mg(2+). At Lys-124 the chain carries N6-carboxylysine. Cys-194 is a [2Fe-2S] cluster binding site. Mg(2+) is bound at residue Glu-446. Catalysis depends on Ser-472, which acts as the Proton acceptor.

The protein belongs to the IlvD/Edd family. As to quaternary structure, homodimer. [2Fe-2S] cluster serves as cofactor. It depends on Mg(2+) as a cofactor.

It carries out the reaction (2R)-2,3-dihydroxy-3-methylbutanoate = 3-methyl-2-oxobutanoate + H2O. The enzyme catalyses (2R,3R)-2,3-dihydroxy-3-methylpentanoate = (S)-3-methyl-2-oxopentanoate + H2O. It functions in the pathway amino-acid biosynthesis; L-isoleucine biosynthesis; L-isoleucine from 2-oxobutanoate: step 3/4. Its pathway is amino-acid biosynthesis; L-valine biosynthesis; L-valine from pyruvate: step 3/4. In terms of biological role, functions in the biosynthesis of branched-chain amino acids. Catalyzes the dehydration of (2R,3R)-2,3-dihydroxy-3-methylpentanoate (2,3-dihydroxy-3-methylvalerate) into 2-oxo-3-methylpentanoate (2-oxo-3-methylvalerate) and of (2R)-2,3-dihydroxy-3-methylbutanoate (2,3-dihydroxyisovalerate) into 2-oxo-3-methylbutanoate (2-oxoisovalerate), the penultimate precursor to L-isoleucine and L-valine, respectively. This is Dihydroxy-acid dehydratase from Prochlorococcus marinus (strain MIT 9312).